A 404-amino-acid polypeptide reads, in one-letter code: S-adenosylmethionine synthase (404 aa).

ATP is bound at residue 139-144; sequence GKGSSD.

The protein belongs to the AdoMet synthase 2 family. It depends on Mg(2+) as a cofactor.

The catalysed reaction is L-methionine + ATP + H2O = S-adenosyl-L-methionine + phosphate + diphosphate. Its pathway is amino-acid biosynthesis; S-adenosyl-L-methionine biosynthesis; S-adenosyl-L-methionine from L-methionine: step 1/1. Its function is as follows. Catalyzes the formation of S-adenosylmethionine from methionine and ATP. In Saccharolobus solfataricus (strain ATCC 35092 / DSM 1617 / JCM 11322 / P2) (Sulfolobus solfataricus), this protein is S-adenosylmethionine synthase.